Here is a 220-residue protein sequence, read N- to C-terminus: Histone deacetylase complex subunit SAP30 (220 aa).

The segment at 1–129 (MNGFTPDEMS…QSVRNRRKRK (129 aa)) is interaction with NCOR1. Thr-5 carries the post-translational modification Phosphothreonine. The Atypical zinc-finger motif lies at 67-115 (CCLREDGERCGRAAGNASFSKRIQKSISQKKVKIELDKSARHLYICDYH). Lys-87 is covalently cross-linked (Glycyl lysine isopeptide (Lys-Gly) (interchain with G-Cter in SUMO2)). Positions 123–143 (RNRRKRKGSDDDGGDSPVQDI) are disordered. The interaction with SIN3A stretch occupies residues 130 to 220 (GSDDDGGDSP…SDLKVDSGVH (91 aa)). Phosphoserine is present on residues Ser-131 and Ser-138. Thr-145 is modified (phosphothreonine). Residues Lys-194, Lys-205, and Lys-214 each participate in a glycyl lysine isopeptide (Lys-Gly) (interchain with G-Cter in SUMO2) cross-link.

It belongs to the SAP30 family. As to quaternary structure, component of the histone deacetylase complex that includes at least SIN3A, HDAC1 and HDAC2. Found in a complex composed of at least SINHCAF, SIN3A, HDAC1, SAP30, RBBP4, OGT and TET1. Interacts with HDAC1. Interacts with SIN3A, SIN3B, HDAC2, RBBP4 and NCOR1. Interacts with SAMSN1. Interacts with HCFC1. Interacts with SAP30BP. As to expression, expressed in all tissues tested with highest levels in pancreas, ovary, PBL, spleen and thymus; lowest levels in brain, placenta, lung and kidney.

The protein resides in the nucleus. Its function is as follows. Involved in the functional recruitment of the Sin3-histone deacetylase complex (HDAC) to a specific subset of N-CoR corepressor complexes. Capable of transcription repression by N-CoR. Active in deacetylating core histone octamers (when in a complex) but inactive in deacetylating nucleosomal histones. In terms of biological role, (Microbial infection) Involved in transcriptional repression of HHV-1 genes TK and gC. This chain is Histone deacetylase complex subunit SAP30, found in Homo sapiens (Human).